We begin with the raw amino-acid sequence, 76 residues long: MLGGLTGWHLLIILAVILLLFGAPKLPALAKSVGQSMRIFKGEVNEMKKDGDKDKGEGGSTAPATDTGASSEQNSK.

A helical membrane pass occupies residues 1-21 (MLGGLTGWHLLIILAVILLLF). The span at 44 to 57 (VNEMKKDGDKDKGE) shows a compositional bias: basic and acidic residues. The segment at 44–76 (VNEMKKDGDKDKGEGGSTAPATDTGASSEQNSK) is disordered. Polar residues predominate over residues 62 to 76 (APATDTGASSEQNSK).

This sequence belongs to the TatA/E family. The Tat system comprises two distinct complexes: a TatABC complex, containing multiple copies of TatA, TatB and TatC subunits, and a separate TatA complex, containing only TatA subunits. Substrates initially bind to the TatABC complex, which probably triggers association of the separate TatA complex to form the active translocon.

It is found in the cell membrane. Part of the twin-arginine translocation (Tat) system that transports large folded proteins containing a characteristic twin-arginine motif in their signal peptide across membranes. TatA could form the protein-conducting channel of the Tat system. The chain is Sec-independent protein translocase protein TatA from Leifsonia xyli subsp. xyli (strain CTCB07).